Reading from the N-terminus, the 126-residue chain is Holo-[acyl-carrier-protein] synthase (126 aa).

Residues D9 and E58 each coordinate Mg(2+).

The protein belongs to the P-Pant transferase superfamily. AcpS family. Mg(2+) serves as cofactor.

It localises to the cytoplasm. It catalyses the reaction apo-[ACP] + CoA = holo-[ACP] + adenosine 3',5'-bisphosphate + H(+). Functionally, transfers the 4'-phosphopantetheine moiety from coenzyme A to a Ser of acyl-carrier-protein. The polypeptide is Holo-[acyl-carrier-protein] synthase (Buchnera aphidicola subsp. Schizaphis graminum (strain Sg)).